Reading from the N-terminus, the 684-residue chain is Nuclear transcription factor Y subunit gamma (684 aa).

Disordered regions lie at residues 1–74 (MENQ…NIST), 112–238 (MNSP…SSFQ), 414–487 (HSPQ…TQQL), and 511–650 (QQQQ…KNDE). Residues 21 to 49 (SNSHNNHHNNNNNNNYNNNNNNNINNINN) show a composition bias toward low complexity. Residues 58–74 (KSIQQHSPHSSTPNIST) show a composition bias toward polar residues. Positions 142-162 (HQHPSSASSSSSSSSSSLSSS) are enriched in low complexity. Residues 163 to 176 (SHHHHSNHHHHHPN) show a composition bias toward basic residues. Positions 188–203 (PSLNDSSSNGNGTPAL) are enriched in polar residues. Over residues 220–238 (TPTSTPNQRFQSNGSSSFQ) the composition is skewed to low complexity. The span at 414 to 423 (HSPQLQEQSS) shows a compositional bias: polar residues. Positions 424 to 437 (NNNNNNNNNNNNNN) are enriched in low complexity. Polar residues-rich tracts occupy residues 438 to 456 (SVSV…SPLS) and 464 to 477 (SQDY…NNHN). 3 stretches are compositionally biased toward low complexity: residues 478 to 487 (QSSLSQTQQL), 511 to 522 (QQQQHSQQISQQ), and 529 to 637 (PSNS…NNNN).

It belongs to the NFYC/HAP5 subunit family. In terms of assembly, heterotrimeric transcription factor composed of three components, NF-YA, NF-YB and NF-YC. NF-YB and NF-YC must interact and dimerize for NF-YA association and DNA binding.

Its subcellular location is the nucleus. Functionally, stimulates the transcription of various genes by recognizing and binding to a CCAAT motif in promoters. The sequence is that of Nuclear transcription factor Y subunit gamma (nfyc-1) from Dictyostelium discoideum (Social amoeba).